The primary structure comprises 351 residues: Ribonucleoside-diphosphate reductase subunit M2 B (351 aa).

The segment at methionine 1–glutamate 31 is disordered. Aspartate 100, glutamate 131, and histidine 134 together coordinate Fe cation. The active site involves tyrosine 138. Fe cation is bound by residues glutamate 194, glutamate 228, and histidine 231.

Belongs to the ribonucleoside diphosphate reductase small chain family. In terms of assembly, heterotetramer with large (RRM1) subunit. Interacts with p53/TP53. Interacts with RRM1 in response to DNA damage. Requires Fe cation as cofactor.

It is found in the cytoplasm. The protein resides in the nucleus. The catalysed reaction is a 2'-deoxyribonucleoside 5'-diphosphate + [thioredoxin]-disulfide + H2O = a ribonucleoside 5'-diphosphate + [thioredoxin]-dithiol. Plays a pivotal role in cell survival by repairing damaged DNA in a p53/TP53-dependent manner. Supplies deoxyribonucleotides for DNA repair in cells arrested at G1 or G2. Contains an iron-tyrosyl free radical center required for catalysis. Forms an active ribonucleotide reductase (RNR) complex with RRM1 which is expressed both in resting and proliferating cells in response to DNA damage. This chain is Ribonucleoside-diphosphate reductase subunit M2 B (RRM2B), found in Pongo abelii (Sumatran orangutan).